A 488-amino-acid polypeptide reads, in one-letter code: Gamma-aminobutyric acid receptor subunit beta-4 (488 aa).

The N-terminal stretch at 1–25 is a signal peptide; it reads MWTFQADRLSGIVSALAALCVACCA. Over 26–244 the chain is Extracellular; sequence QSPSTGNISV…SFRIKRNIGY (219 aa). N-linked (GlcNAc...) asparagine glycosylation is found at asparagine 32, asparagine 104, asparagine 173, and asparagine 195. Residues cysteine 160 and cysteine 174 are joined by a disulfide bond. Helical transmembrane passes span 245 to 266, 271 to 292, and 304 to 326; these read FILQ…SFWI, SAAR…NTHL, and AIDV…YAFV. The Cytoplasmic segment spans residues 327-465; sequence NYIFFGRGPR…DLTDVSTIDK (139 aa). Residues 466–487 form a helical membrane-spanning segment; it reads WSRIIFPITFGFFNLVYWLYYV.

This sequence belongs to the ligand-gated ion channel (TC 1.A.9) family. Gamma-aminobutyric acid receptor (TC 1.A.9.5) subfamily. GABRB4 sub-subfamily. In terms of assembly, generally pentameric. There are five types of GABA(A) receptor chains: alpha, beta, gamma, delta, and rho.

It is found in the postsynaptic cell membrane. The protein localises to the cell membrane. Its function is as follows. GABA, the major inhibitory neurotransmitter in the vertebrate brain, mediates neuronal inhibition by binding to the GABA/benzodiazepine receptor and opening an integral chloride channel. The sequence is that of Gamma-aminobutyric acid receptor subunit beta-4 (GABRB4) from Gallus gallus (Chicken).